The sequence spans 718 residues: Polyribonucleotide nucleotidyltransferase (718 aa).

Aspartate 496 and aspartate 502 together coordinate Mg(2+). The region spanning 563-622 is the KH domain; that stretch reads PRLLTIKIDPDMIGLVIGPGGKTIKGITEETGAKIDIEDDGTVTISAVDENKAKRARNIV. Residues 632-700 form the S1 motif domain; sequence GDVYAGRVTR…NKGRINLTRL (69 aa).

The protein belongs to the polyribonucleotide nucleotidyltransferase family. The cofactor is Mg(2+).

It localises to the cytoplasm. It carries out the reaction RNA(n+1) + phosphate = RNA(n) + a ribonucleoside 5'-diphosphate. Functionally, involved in mRNA degradation. Catalyzes the phosphorolysis of single-stranded polyribonucleotides processively in the 3'- to 5'-direction. The protein is Polyribonucleotide nucleotidyltransferase of Trichormus variabilis (strain ATCC 29413 / PCC 7937) (Anabaena variabilis).